We begin with the raw amino-acid sequence, 3082 residues long: Autotransporter adhesin BadA (3082 aa).

A signal peptide spans 1-47; the sequence is MKKLSVTSKRQYNLYASPISRRLSLLMKLSLETVTVMFLLGASPVLA. A binds to host cells region spans residues 48-376; that stretch reads SNLALTGAKN…DAVNVAQLKA (329 aa). Residues 48-2901 are surface exposed passenger domain; the sequence is SNLALTGAKN…KVQDIATVAD (2854 aa). The segment at 53 to 2850 is does not bind host cells, no host proangiogenic cytokine induction, collagen or fibronectin, no autoagglutination; sequence TGAKNLSQNS…DARHNGVDSK (2798 aa). The interval 470–2850 is required to bind fibronectin, not required for surface expression on bacteria, bacterial autoagglutination, host cell binding, collagen binding or host proangiogenic cytokine induction; it reads ITGVAEGTDA…DARHNGVDSK (2381 aa). The outer membrane translocation of the passenger domain stretch occupies residues 2902 to 3027; it reads SAVKYEKDST…VSNLRYYDIP (126 aa). 4 beta stranded membrane-spanning segments follow: residues 3028–3039, 3044–3051, 3055–3065, and 3070–3082; these read GSLSLSFGTGIW, AFAIGAGY, DGNIRSNLSIT, and QWGV…LRLK. Residues 3028-3082 form a translocator domain region; sequence GSLSLSFGTGIWRSQSAFAIGAGYTSEDGNIRSNLSITSSGGQWGVGAGITLRLK.

The protein belongs to the autotransporter-2 (AT-2) (TC 1.B.40) family. In terms of assembly, homotrimer. Crystals of the head region form trimers.

Its subcellular location is the cell surface. It localises to the cell outer membrane. Mediates bacterial adherence to host endothelial cells and host extracellular matrix proteins (collagen type I, III, IV, laminin and fibronectin). Static versus dynamic adherence results differ slightly; in dynamic adherence studies bacteria bind to fixed components under a constant defined flow rate to simulate in vivo infection conditions. Induces secretion of host proangiogenic cytokines such as VEGFA, ADM, IGFBP-3 and IL-8. May prevent bacterial phagocytosis by macrophages. Probably mediates bacterial autoagglutination. Negatively impacts type IV secretion system effectors (VirB/D4 T4SS and its substrate Bep proteins), possibly by preventing close association of host and bacterial cells. This implies the 2 factors are expressed at different times during infection. The protein is Autotransporter adhesin BadA of Bartonella henselae (Rochalimaea henselae).